The sequence spans 405 residues: L-rhamnonate dehydratase (405 aa).

2 residues coordinate substrate: H33 and R59. The Mg(2+) site is built by D226, E252, and E280. The active-site Proton acceptor is the H329. Residue E349 participates in substrate binding.

It belongs to the mandelate racemase/muconate lactonizing enzyme family. RhamD subfamily. Homooctamer; tetramer of dimers. Mg(2+) is required as a cofactor.

It catalyses the reaction L-rhamnonate = 2-dehydro-3-deoxy-L-rhamnonate + H2O. Catalyzes the dehydration of L-rhamnonate to 2-keto-3-deoxy-L-rhamnonate (KDR). The chain is L-rhamnonate dehydratase from Shigella boydii serotype 4 (strain Sb227).